A 241-amino-acid polypeptide reads, in one-letter code: uncharacterized protein (241 aa).

This is an uncharacterized protein from Pasteurella multocida (strain Pm70).